We begin with the raw amino-acid sequence, 579 residues long: Threonylcarbamoyladenosine tRNA methylthiotransferase (579 aa).

Residue S53 is modified to Phosphoserine. The MTTase N-terminal domain occupies 64 to 172 (QKIWIRTWGC…VVEVVEETIK (109 aa)). [4Fe-4S] cluster is bound by residues C73 and C109. At S122 the chain carries Phosphoserine. [4Fe-4S] cluster is bound by residues C138, C214, C218, and C221. Residues 200–431 (RKNPLIEIIS…RVFHSYSPYD (232 aa)) enclose the Radical SAM core domain. In terms of domain architecture, TRAM spans 431 to 493 (DHKIGERQQV…KHFMKGQPVS (63 aa)). T499 carries the post-translational modification Phosphothreonine. Residues 556–578 (CALRMSVGLALLGLLFAFFVKVY) form a helical membrane-spanning segment.

Belongs to the methylthiotransferase family. CDKAL1 subfamily. It depends on [4Fe-4S] cluster as a cofactor. As to expression, expressed in pancreatic islets.

The protein localises to the endoplasmic reticulum membrane. It catalyses the reaction N(6)-L-threonylcarbamoyladenosine(37) in tRNA + (sulfur carrier)-SH + AH2 + 2 S-adenosyl-L-methionine = 2-methylsulfanyl-N(6)-L-threonylcarbamoyladenosine(37) in tRNA + (sulfur carrier)-H + 5'-deoxyadenosine + L-methionine + A + S-adenosyl-L-homocysteine + 2 H(+). Its function is as follows. Catalyzes the methylthiolation of N6-threonylcarbamoyladenosine (t(6)A), leading to the formation of 2-methylthio-N6-threonylcarbamoyladenosine (ms(2)t(6)A) at position 37 in tRNAs that read codons beginning with adenine. In Homo sapiens (Human), this protein is Threonylcarbamoyladenosine tRNA methylthiotransferase (CDKAL1).